The sequence spans 498 residues: ADP,ATP carrier protein 1 (498 aa).

The Cytoplasmic segment spans residues 1–33 (MNNPKNDNYLSELSKVIWPIERYENKKFLPMAF). The chain crosses the membrane as a helical span at residues 34 to 54 (MMFCILLNYSTLRSIKDGFVV). Cysteine 37 and cysteine 85 form a disulfide bridge. The Extracellular portion of the chain corresponds to 55–67 (TDIGAEAISFLKT). A helical transmembrane segment spans residues 68 to 88 (YIVLPSAVIAMVIYVKLCDIL). Topologically, residues 89-92 (KQEN) are cytoplasmic. Residues 93-113 (VFYVITSFFLGYFALFAFVLY) form a helical membrane-spanning segment. Residues 114–147 (PYPDLVHPDPETIESWSVAYPNVKWFIRIVGKWS) are Extracellular-facing. Residues 148 to 168 (FASFYTMAELWGTMMLSLLFW) traverse the membrane as a helical segment. Residues 169 to 184 (QFANQITKTDEAKRFY) are Cytoplasmic-facing. Residues 185–205 (SMFGLLANLALPVTSVIIGYC) form a helical membrane-spanning segment. Residues 206 to 218 (LHEKTQIVAEHLK) are Extracellular-facing. Residues 219–239 (FVPLFVIMITSSFLVILTYRW) traverse the membrane as a helical segment. Residues 240 to 279 (MNKNVLTDPRLYDPALVKEKKAKAKMSLIDSFKMIFTSKY) lie on the Cytoplasmic side of the membrane. The helical transmembrane segment at 280–300 (VGYIALLLIAYGVSVNLVEGV) threads the bilayer. Topologically, residues 301-320 (WKSKVKELYPTKEAYTIYMG) are extracellular. The chain crosses the membrane as a helical span at residues 321–341 (KFQFYQGWVAIAFMLIGSNIL). Residues 342–348 (RKVSWLT) lie on the Cytoplasmic side of the membrane. A helical transmembrane segment spans residues 349–369 (AAMITPLMMLITGAAFFAFIF). Topologically, residues 370-379 (FDSVIAMHLT) are extracellular. The chain crosses the membrane as a helical span at residues 380–400 (GILASGPLALAVMIGMIQNVL). Residues 401 to 438 (SKGVKYSLFDATKNMAYIPLDKDLRVKGQAAVEVIGGR) lie on the Cytoplasmic side of the membrane. 436–442 (GGRFGKS) contacts ATP. The chain crosses the membrane as a helical span at residues 439-459 (FGKSGGAIIQSTFFILFPAFG). Over 460–465 (FVEATP) the chain is Extracellular. Residues 466-486 (YFASIFFVIVILWIYAVKGLN) form a helical membrane-spanning segment. Residues 487-498 (KEYKVLVNKTEK) lie on the Cytoplasmic side of the membrane.

It belongs to the ADP/ATP translocase tlc family.

The protein resides in the cell membrane. Provides the rickettsial cell with host ATP in exchange for rickettsial ADP. This is an obligate exchange system. This energy acquiring activity is an important component of rickettsial parasitism. The sequence is that of ADP,ATP carrier protein 1 (tlcA) from Rickettsia conorii (strain ATCC VR-613 / Malish 7).